Reading from the N-terminus, the 349-residue chain is Aminomethyltransferase (349 aa).

Belongs to the GcvT family. As to quaternary structure, the glycine cleavage system is composed of four proteins: P, T, L and H.

The enzyme catalyses N(6)-[(R)-S(8)-aminomethyldihydrolipoyl]-L-lysyl-[protein] + (6S)-5,6,7,8-tetrahydrofolate = N(6)-[(R)-dihydrolipoyl]-L-lysyl-[protein] + (6R)-5,10-methylene-5,6,7,8-tetrahydrofolate + NH4(+). In terms of biological role, the glycine cleavage system catalyzes the degradation of glycine. The polypeptide is Aminomethyltransferase (Thermus thermophilus (strain ATCC BAA-163 / DSM 7039 / HB27)).